The following is a 1113-amino-acid chain: StAR-related lipid transfer protein 13 (1113 aa).

N-acetylmethionine is present on Met1. Residues 55 to 122 (QQEIEAKEAC…LNKCASMRLD (68 aa)) enclose the SAM domain. Disordered regions lie at residues 164–218 (PVAD…HSAD), 230–256 (SSLP…RTRA), and 308–343 (NGDL…STVS). Over residues 179-188 (NTASSESVLT) the composition is skewed to polar residues. Over residues 197-214 (SIHSESSGGSDSRSQSGH) the composition is skewed to low complexity. Positions 230-245 (SSLPQSTREGLNQSFH) are enriched in polar residues. The span at 322 to 340 (GLPCSSKSSGESSPLENSS) shows a compositional bias: low complexity. At Ser411 the chain carries Phosphoserine. 2 stretches are compositionally biased toward polar residues: residues 421–435 (SNGV…SLGR) and 529–549 (PNQV…TTPS). 2 disordered regions span residues 421 to 443 (SNGV…GMRE) and 514 to 578 (HSTL…GASL). One can recognise a Rho-GAP domain in the interval 663–868 (VPLIVHVQRT…HMITECNRLF (206 aa)). Residues 899–1109 (LAESGATFHT…SFQPLVAEGP (211 aa)) enclose the START domain.

As to quaternary structure, homodimer. Interacts with TAX1BP1.

Its subcellular location is the cytoplasm. The protein resides in the membrane. It localises to the mitochondrion membrane. The protein localises to the lipid droplet. May function as a GTPase-activating protein. This is StAR-related lipid transfer protein 13 (Stard13) from Mus musculus (Mouse).